We begin with the raw amino-acid sequence, 569 residues long: 3-(3-hydroxy-phenyl)propionate/3-hydroxycinnamic acid hydroxylase (569 aa).

Residues 8–37 (DVVI…VVDE) and 273–283 (FREGRLMLAGD) each bind FAD.

This sequence belongs to the PheA/TfdB FAD monooxygenase family. It depends on FAD as a cofactor.

It carries out the reaction 3-(3-hydroxyphenyl)propanoate + NADH + O2 + H(+) = 3-(2,3-dihydroxyphenyl)propanoate + NAD(+) + H2O. The catalysed reaction is (2E)-3-(3-hydroxyphenyl)prop-2-enoate + NADH + O2 + H(+) = (2E)-3-(2,3-dihydroxyphenyl)prop-2-enoate + NAD(+) + H2O. It functions in the pathway aromatic compound metabolism; 3-phenylpropanoate degradation. Its function is as follows. Catalyzes the insertion of one atom of molecular oxygen into position 2 of the phenyl ring of 3-(3-hydroxyphenyl)propionate (3-HPP) and hydroxycinnamic acid (3HCI). The protein is 3-(3-hydroxy-phenyl)propionate/3-hydroxycinnamic acid hydroxylase of Mycolicibacterium gilvum (strain PYR-GCK) (Mycobacterium gilvum (strain PYR-GCK)).